Consider the following 273-residue polypeptide: Mediator of RNA polymerase II transcription subunit 27 (273 aa).

It belongs to the Mediator complex subunit 27 family. As to quaternary structure, component of the Mediator complex.

The protein resides in the nucleus. Component of the Mediator complex, a coactivator involved in the regulated transcription of nearly all RNA polymerase II-dependent genes. Mediator functions as a bridge to convey information from gene-specific regulatory proteins to the basal RNA polymerase II transcription machinery. Mediator is recruited to promoters by direct interactions with regulatory proteins and serves as a scaffold for the assembly of a functional preinitiation complex with RNA polymerase II and the general transcription factors. The sequence is that of Mediator of RNA polymerase II transcription subunit 27 (med27) from Schizosaccharomyces pombe (strain 972 / ATCC 24843) (Fission yeast).